Here is a 23-residue protein sequence, read N- to C-terminus: Clavanin-B (23 aa).

The residue at position 23 (Phe-23) is a Phenylalanine amide.

It is found in the secreted. Has antimicrobial activity. This chain is Clavanin-B, found in Styela clava (Sea squirt).